The primary structure comprises 338 residues: MO25-like protein 2 (338 aa).

Belongs to the Mo25 family.

It localises to the cytoplasm. It is found in the cytoskeleton. The protein localises to the spindle pole. In terms of biological role, regulates asymmetric cell division in Q.p neuroblast lineage. Plays a role in cell shedding during embryogenesis. This chain is MO25-like protein 2 (mop-25.2), found in Caenorhabditis elegans.